A 795-amino-acid chain; its full sequence is Protein Jade-3 (795 aa).

The span at 1–25 shows a compositional bias: low complexity; sequence MKRLRTPSSSDSSDNESPSTSFSSN. The interval 1 to 41 is disordered; it reads MKRLRTPSSSDSSDNESPSTSFSSNKYGSKPGTPASAQKKP. A PHD-type 1 zinc finger spans residues 201–251; it reads DVICDVCRSPDSEEGNDMVFCDKCNICVHQACYGIVKVPDGNWLCRTCVLG. The C2HC pre-PHD-type zinc-finger motif lies at 253–287; that stretch reads TPQCLLCPKTGGAMKATRAGTKWAHVSCALWIPEV. Residues 311–367 form a PHD-type 2 zinc finger; sequence LICSLCKLKTGACIQCSVKNCTIPFHVTCAFEHSLEMKTILDEGDEVKFKSYCLKHS. Disordered regions lie at residues 630–654, 667–687, and 714–795; these read HGQS…NGIL, AASE…SGFH, and FEKN…SVQR. Polar residues-rich tracts occupy residues 678–687 and 720–732; these read SGKSQSSGFH and KSSG…STER.

The protein belongs to the JADE family. In terms of assembly, component of the HBO1 complex.

In terms of biological role, scaffold subunit of some HBO1 complexes, which have a histone H4 acetyltransferase activity. This is Protein Jade-3 (jade3) from Danio rerio (Zebrafish).